The following is a 451-amino-acid chain: Phosphoglucosamine mutase (451 aa).

Catalysis depends on S102, which acts as the Phosphoserine intermediate. Residues S102, D243, D245, and D247 each coordinate Mg(2+). A Phosphoserine modification is found at S102.

The protein belongs to the phosphohexose mutase family. Mg(2+) serves as cofactor. Activated by phosphorylation.

The enzyme catalyses alpha-D-glucosamine 1-phosphate = D-glucosamine 6-phosphate. Its function is as follows. Catalyzes the conversion of glucosamine-6-phosphate to glucosamine-1-phosphate. In Salinispora tropica (strain ATCC BAA-916 / DSM 44818 / JCM 13857 / NBRC 105044 / CNB-440), this protein is Phosphoglucosamine mutase.